Reading from the N-terminus, the 120-residue chain is Ig heavy chain V region 36-65 (120 aa).

The Ig-like domain maps to 1–111 (VQLQQSGAEL…GGSYYFDYWG (111 aa)).

This is Ig heavy chain V region 36-65 from Mus musculus (Mouse).